Here is a 323-residue protein sequence, read N- to C-terminus: 3-dehydroquinate synthase (323 aa).

The protein belongs to the archaeal-type DHQ synthase family.

The enzyme catalyses 2-amino-2,3,7-trideoxy-D-lyxo-hept-6-ulosonate + NAD(+) + H2O = 3-dehydroquinate + NH4(+) + NADH + H(+). In terms of biological role, catalyzes the oxidative deamination and cyclization of 2-amino-3,7-dideoxy-D-threo-hept-6-ulosonic acid (ADH) to yield 3-dehydroquinate (DHQ), which is fed into the canonical shikimic pathway of aromatic amino acid biosynthesis. In Archaeoglobus fulgidus (strain ATCC 49558 / DSM 4304 / JCM 9628 / NBRC 100126 / VC-16), this protein is 3-dehydroquinate synthase.